A 279-amino-acid polypeptide reads, in one-letter code: 2-dehydro-3-deoxyphosphooctonate aldolase (279 aa).

It belongs to the KdsA family.

The protein resides in the cytoplasm. The catalysed reaction is D-arabinose 5-phosphate + phosphoenolpyruvate + H2O = 3-deoxy-alpha-D-manno-2-octulosonate-8-phosphate + phosphate. The protein operates within carbohydrate biosynthesis; 3-deoxy-D-manno-octulosonate biosynthesis; 3-deoxy-D-manno-octulosonate from D-ribulose 5-phosphate: step 2/3. Its pathway is bacterial outer membrane biogenesis; lipopolysaccharide biosynthesis. The sequence is that of 2-dehydro-3-deoxyphosphooctonate aldolase from Azoarcus sp. (strain BH72).